Here is a 635-residue protein sequence, read N- to C-terminus: Threonine--tRNA ligase (635 aa).

Positions 1-61 (MIKITLKDGS…KEDAALELLT (61 aa)) constitute a TGS domain. Residues 242–532 (DHRKLGQELD…LTEHFAGAFP (291 aa)) are catalytic. The Zn(2+) site is built by Cys-333, His-384, and His-509.

This sequence belongs to the class-II aminoacyl-tRNA synthetase family. Homodimer. Requires Zn(2+) as cofactor.

It localises to the cytoplasm. The catalysed reaction is tRNA(Thr) + L-threonine + ATP = L-threonyl-tRNA(Thr) + AMP + diphosphate + H(+). Functionally, catalyzes the attachment of threonine to tRNA(Thr) in a two-step reaction: L-threonine is first activated by ATP to form Thr-AMP and then transferred to the acceptor end of tRNA(Thr). Also edits incorrectly charged L-seryl-tRNA(Thr). In Desulforamulus reducens (strain ATCC BAA-1160 / DSM 100696 / MI-1) (Desulfotomaculum reducens), this protein is Threonine--tRNA ligase.